A 192-amino-acid polypeptide reads, in one-letter code: Flavin prenyltransferase UbiX (192 aa).

FMN-binding positions include 10–12, Ser-36, 92–95, and Arg-127; these read GAS and SVAT. Residues Tyr-157 and Lys-173 each coordinate dimethylallyl phosphate.

This sequence belongs to the UbiX/PAD1 family.

The enzyme catalyses dimethylallyl phosphate + FMNH2 = prenylated FMNH2 + phosphate. Flavin prenyltransferase that catalyzes the synthesis of the prenylated FMN cofactor (prenyl-FMN) for 4-hydroxy-3-polyprenylbenzoic acid decarboxylase UbiD. The prenyltransferase is metal-independent and links a dimethylallyl moiety from dimethylallyl monophosphate (DMAP) to the flavin N5 and C6 atoms of FMN. The polypeptide is Flavin prenyltransferase UbiX (Chlamydia trachomatis serovar D (strain ATCC VR-885 / DSM 19411 / UW-3/Cx)).